An 881-amino-acid chain; its full sequence is Mechanosensitive ion channel protein 4 (881 aa).

A disordered region spans residues 35–245 (FWHNDKSSKP…EEEDPFSEED (211 aa)). Over residues 56 to 66 (FMRRSSEKSEE) the composition is skewed to basic and acidic residues. Polar residues-rich tracts occupy residues 73 to 82 (LINQFLNKQK), 100 to 118 (QKNT…SASP), and 206 to 230 (TPRS…NQGG). Residues 234-245 (LEEEEDPFSEED) show a composition bias toward acidic residues. Transmembrane regions (helical) follow at residues 255-275 (ICVW…SLIC), 297-317 (VMVL…KLFV), 339-359 (KPVQ…FLFD), and 377-397 (VLIC…LVKV). The disordered stretch occupies residues 457 to 501 (GPKAVSSPPQVTVGSGRLQKSPSRVGKSPVLSRSGSKKEGGEEGI). A compositionally biased stretch (polar residues) spans 463–478 (SPPQVTVGSGRLQKSP). Over residues 492–501 (SKKEGGEEGI) the composition is skewed to basic and acidic residues. The next 2 membrane-spanning stretches (helical) occupy residues 643–663 (IVDV…LGIA) and 678–698 (VVFV…FVFV).

It belongs to the MscS (TC 1.A.23) family.

Its subcellular location is the membrane. In terms of biological role, mechanosensitive channel that opens in response to stretch forces in the membrane lipid bilayer. This chain is Mechanosensitive ion channel protein 4 (MSL4), found in Arabidopsis thaliana (Mouse-ear cress).